The primary structure comprises 827 residues: Discs large homolog 1-like protein (827 aa).

2 disordered regions span residues 38–61 and 102–133; these read HQDE…TPGP and SPVV…ANPP. A compositionally biased stretch (polar residues) spans 44–56; it reads GSPQEPSSPQFTD. 3 PDZ domains span residues 159–246, 254–341, and 403–484; these read EITL…RRRK, EIKL…AKPN, and KVVL…QYRP. The region spanning 518 to 588 is the SH3 domain; the sequence is KRSLYVRALF…PSKRRVEKKE (71 aa). Residues 595–618 are disordered; that stretch reads VKFNSKSREKGDNPDDMLSKGQSG. The region spanning 637–812 is the Guanylate kinase-like domain; that stretch reads SRPVIILGPM…IYDQVKQIIE (176 aa).

It belongs to the MAGUK family.

It localises to the membrane. Functionally, may play a role in synapse assembly and function. The sequence is that of Discs large homolog 1-like protein (dlg1l) from Danio rerio (Zebrafish).